A 638-amino-acid polypeptide reads, in one-letter code: DNA gyrase subunit B (638 aa).

Residues 423 to 537 (CEVYIVEGDS…KGHVYLAMPP (115 aa)) form the Toprim domain. Mg(2+) is bound by residues E429, D502, and D504.

The protein belongs to the type II topoisomerase GyrB family. In terms of assembly, heterotetramer, composed of two GyrA and two GyrB chains. In the heterotetramer, GyrA contains the active site tyrosine that forms a transient covalent intermediate with DNA, while GyrB binds cofactors and catalyzes ATP hydrolysis. It depends on Mg(2+) as a cofactor. Mn(2+) serves as cofactor. Requires Ca(2+) as cofactor.

It is found in the cytoplasm. It catalyses the reaction ATP-dependent breakage, passage and rejoining of double-stranded DNA.. In terms of biological role, a type II topoisomerase that negatively supercoils closed circular double-stranded (ds) DNA in an ATP-dependent manner to modulate DNA topology and maintain chromosomes in an underwound state. Negative supercoiling favors strand separation, and DNA replication, transcription, recombination and repair, all of which involve strand separation. Also able to catalyze the interconversion of other topological isomers of dsDNA rings, including catenanes and knotted rings. Type II topoisomerases break and join 2 DNA strands simultaneously in an ATP-dependent manner. The polypeptide is DNA gyrase subunit B (Treponema denticola (strain ATCC 35405 / DSM 14222 / CIP 103919 / JCM 8153 / KCTC 15104)).